The sequence spans 20 residues: Phosphoglycerate kinase (20 aa).

Residues 1-20 (MNKKSIRNVNLKGKRVFDRV) are disordered.

Belongs to the phosphoglycerate kinase family. In terms of assembly, monomer.

It is found in the cytoplasm. It carries out the reaction (2R)-3-phosphoglycerate + ATP = (2R)-3-phospho-glyceroyl phosphate + ADP. It functions in the pathway carbohydrate degradation; glycolysis; pyruvate from D-glyceraldehyde 3-phosphate: step 2/5. The sequence is that of Phosphoglycerate kinase from Bacillus cereus.